Reading from the N-terminus, the 436-residue chain is Protein VHS2 (436 aa).

Residues 1-34 (MDTSNHNQDHDSHVAAQRENDNNYMPPSPSMSES) form a disordered region. A compositionally biased stretch (basic and acidic residues) spans 7-21 (NQDHDSHVAAQREND). 4 positions are modified to phosphoserine: Ser-53, Ser-61, Ser-102, and Ser-172. 4 disordered regions span residues 165-195 (RALGRTRSLSSQSFDNETSPAHPRSPNDHGS), 211-266 (NNNN…HMNF), 282-360 (NNAN…EEDN), and 389-436 (NDNH…DTTK). Over residues 171–183 (RSLSSQSFDNETS) the composition is skewed to polar residues. 3 stretches are compositionally biased toward low complexity: residues 211–226 (NNNNVSNATSTSSTAN), 238–261 (SFSSSLLNSPSHLPSPPSASASPP), and 282–299 (NNANGGTSAGSTTGAALS). Residues Ser-299, Ser-301, Ser-303, and Ser-325 each carry the phosphoserine modification. Over residues 300–312 (RSPSNQQYLLKQQ) the composition is skewed to polar residues. Low complexity predominate over residues 401-436 (TINNNIKNSPAFTNSNPSSKSNSNSTITSMNPDTTK).

The protein to yeast MFL3.

It localises to the cytoplasm. Functionally, can suppress the synthetic lethality of the hal3 sit4 double mutation when overexpressed, suggesting that it is involved in the G1-S transition. The polypeptide is Protein VHS2 (VHS2) (Saccharomyces cerevisiae (strain ATCC 204508 / S288c) (Baker's yeast)).